Reading from the N-terminus, the 299-residue chain is Nucleoporin POM34 (299 aa).

The segment at 1–39 is disordered; that stretch reads MKIQAGQLGLDDNDVPGPLPDTDSKPSSQSQNDTPMFKL. Positions 25-34 are enriched in polar residues; it reads KPSSQSQNDT. Helical transmembrane passes span 64 to 84 and 133 to 153; these read IMTNVIAFAFWNLLVKFIKFF and LFHLLISLNILFSLWKLLSTV. S270 is modified (phosphoserine). Position 273 is a phosphothreonine (T273). 2 positions are modified to phosphoserine: S292 and S294.

Component of the nuclear pore complex (NPC). NPC constitutes the exclusive means of nucleocytoplasmic transport. NPCs allow the passive diffusion of ions and small molecules and the active, nuclear transport receptor-mediated bidirectional transport of macromolecules such as proteins, RNAs, ribonucleoparticles (RNPs), and ribosomal subunits across the nuclear envelope. Due to its 8-fold rotational symmetry, all subunits are present with 8 copies or multiples thereof.

It localises to the nucleus. The protein localises to the nuclear pore complex. Its subcellular location is the nucleus membrane. In terms of biological role, functions as a component of the nuclear pore complex (NPC). NPC components, collectively referred to as nucleoporins (NUPs), can play the role of both NPC structural components and of docking or interaction partners for transiently associated nuclear transport factors. This is Nucleoporin POM34 (POM34) from Saccharomyces cerevisiae (strain ATCC 204508 / S288c) (Baker's yeast).